The sequence spans 512 residues: Ribose import ATP-binding protein RbsA 1 (512 aa).

ABC transporter domains lie at 8 to 244 (FRME…IGRE) and 257 to 502 (PEEK…LNIG). Position 40-47 (40-47 (GENGAGKS)) interacts with ATP.

It belongs to the ABC transporter superfamily. Ribose importer (TC 3.A.1.2.1) family. In terms of assembly, the complex is composed of an ATP-binding protein (RbsA), two transmembrane proteins (RbsC) and a solute-binding protein (RbsB).

The protein resides in the cell inner membrane. It catalyses the reaction D-ribose(out) + ATP + H2O = D-ribose(in) + ADP + phosphate + H(+). In terms of biological role, part of the ABC transporter complex RbsABC involved in ribose import. Responsible for energy coupling to the transport system. The polypeptide is Ribose import ATP-binding protein RbsA 1 (Rhizobium etli (strain ATCC 51251 / DSM 11541 / JCM 21823 / NBRC 15573 / CFN 42)).